The chain runs to 300 residues: ETS homologous factor (300 aa).

A PNT domain is found at 29–115 (PTCNVSSGFF…SNLQHLKWNG (87 aa)). Residues 181–203 (VAESPDMKKEQDHPVKSHTKKHN) form a disordered region. Positions 185–195 (PDMKKEQDHPV) are enriched in basic and acidic residues. The segment at residues 207–289 (THLWEFIRDI…DGRRLVYKFG (83 aa)) is a DNA-binding region (ETS).

The protein belongs to the ETS family. As to expression, highly expressed in kidney and lung, weakly in skeletal muscle, heart, and liver, and not detected in brain, spleen or testis.

Its subcellular location is the nucleus. Transcriptional activator that may play a role in regulating epithelial cell differentiation and proliferation. May act as a repressor for a specific subset of ETS/AP-1-responsive genes, and as a modulator of the nuclear response to mitogen-activated protein kinase signaling cascades. Binds to DNA sequences containing the consensus nucleotide core sequence GGAA. Involved in regulation of TNFRSF10B/DR5 expression through Ets-binding sequences on the TNFRSF10B/DR5 promoter. This chain is ETS homologous factor, found in Mus musculus (Mouse).